A 253-amino-acid chain; its full sequence is Neurotrophin-3 (253 aa).

The signal sequence occupies residues 1-18; that stretch reads MSILFYVMFLAYLRGVQG. The propeptide occupies 19 to 134; it reads NSMDQRSLPE…AANRTSRRKR (116 aa). A disordered region spans residues 62–89; sequence TLPKAEAPPREPAKSEFQPVTAMGPELL. N-linked (GlcNAc...) asparagine glycosylation is present at N127. Disulfide bonds link C148/C213, C191/C242, and C201/C244.

This sequence belongs to the NGF-beta family.

The protein resides in the secreted. Seems to promote the survival of visceral and proprioceptive sensory neurons. This is Neurotrophin-3 (NTF3) from Bos taurus (Bovine).